Consider the following 446-residue polypeptide: MQVSLESTSSIERRMTIGVPATQVNSEVEKRLQKTARTVRMNGFRPGKVPMSVVKKRYGEGVRQEVIGEMMRDAYVEALQKEDLNPAGYPKFEPKKIEDGEDLEFIATFEIYPEVSIGDLSSISVEKEDFEIVDADVDSMIEKLRQQSSEWKDSEDAAAEGDRLTIDFKGMIDGEAFEGGSAQNAQIVIGSQRMIPGFEDGLVGLKAGDEKTLDLTFPEDYHAENLKGKLAQFEVKVSKVERSELPEINDEFFAQYGVQEGGEEAFKVEIRKNMEREARFAIANKVKQQVVDQLLGLSEFEVPSALVDSEVNRMREDAVQRFGGGQMKASQLPAELFKDQAVKRVKTGLIFAQVVKDNNLEATEEQIEAKIRELASSYQEPEQVVSWYMSNPEQKAQMQSVVLEDVVVDFVADKAKIETKSVSYEDAVKPRTAPAEQAEDGEQSAE.

Residues 161 to 246 form the PPIase FKBP-type domain; sequence GDRLTIDFKG…VSKVERSELP (86 aa). The segment at 422 to 446 is disordered; that stretch reads VSYEDAVKPRTAPAEQAEDGEQSAE. Residues 437–446 show a composition bias toward acidic residues; that stretch reads QAEDGEQSAE.

Belongs to the FKBP-type PPIase family. Tig subfamily.

The protein localises to the cytoplasm. It carries out the reaction [protein]-peptidylproline (omega=180) = [protein]-peptidylproline (omega=0). In terms of biological role, involved in protein export. Acts as a chaperone by maintaining the newly synthesized protein in an open conformation. Functions as a peptidyl-prolyl cis-trans isomerase. The polypeptide is Trigger factor (Hahella chejuensis (strain KCTC 2396)).